Consider the following 194-residue polypeptide: Protein GrpE (194 aa).

Residues 1-40 (MSRKHHKEQEEIQEQETISAGAAETPAEETAAIPAATEAD) form a disordered region. Low complexity predominate over residues 20 to 38 (AGAAETPAEETAAIPAATE).

It belongs to the GrpE family. In terms of assembly, homodimer.

The protein localises to the cytoplasm. In terms of biological role, participates actively in the response to hyperosmotic and heat shock by preventing the aggregation of stress-denatured proteins, in association with DnaK and GrpE. It is the nucleotide exchange factor for DnaK and may function as a thermosensor. Unfolded proteins bind initially to DnaJ; upon interaction with the DnaJ-bound protein, DnaK hydrolyzes its bound ATP, resulting in the formation of a stable complex. GrpE releases ADP from DnaK; ATP binding to DnaK triggers the release of the substrate protein, thus completing the reaction cycle. Several rounds of ATP-dependent interactions between DnaJ, DnaK and GrpE are required for fully efficient folding. The protein is Protein GrpE of Chlorobaculum tepidum (strain ATCC 49652 / DSM 12025 / NBRC 103806 / TLS) (Chlorobium tepidum).